The sequence spans 168 residues: Crossover junction endodeoxyribonuclease RuvC (168 aa).

Catalysis depends on residues D7, E67, and H139. Residues D7, E67, and H139 each contribute to the Mg(2+) site.

The protein belongs to the RuvC family. Homodimer which binds Holliday junction (HJ) DNA. The HJ becomes 2-fold symmetrical on binding to RuvC with unstacked arms; it has a different conformation from HJ DNA in complex with RuvA. In the full resolvosome a probable DNA-RuvA(4)-RuvB(12)-RuvC(2) complex forms which resolves the HJ. Requires Mg(2+) as cofactor.

It localises to the cytoplasm. It carries out the reaction Endonucleolytic cleavage at a junction such as a reciprocal single-stranded crossover between two homologous DNA duplexes (Holliday junction).. The RuvA-RuvB-RuvC complex processes Holliday junction (HJ) DNA during genetic recombination and DNA repair. Endonuclease that resolves HJ intermediates. Cleaves cruciform DNA by making single-stranded nicks across the HJ at symmetrical positions within the homologous arms, yielding a 5'-phosphate and a 3'-hydroxyl group; requires a central core of homology in the junction. The consensus cleavage sequence is 5'-(A/T)TT(C/G)-3'. Cleavage occurs on the 3'-side of the TT dinucleotide at the point of strand exchange. HJ branch migration catalyzed by RuvA-RuvB allows RuvC to scan DNA until it finds its consensus sequence, where it cleaves and resolves the cruciform DNA. This chain is Crossover junction endodeoxyribonuclease RuvC, found in Deinococcus geothermalis (strain DSM 11300 / CIP 105573 / AG-3a).